The following is a 467-amino-acid chain: Chromosomal replication initiator protein DnaA (467 aa).

The interval 1–74 (MSADVWSQGC…ESVLSDLAGK (74 aa)) is domain I, interacts with DnaA modulators. The domain II stretch occupies residues 74-130 (KPVRLDLQLAAREAPPRPSSDAPRSNGHPQAAGQWLGAPSSSNAGAYTQASAPTPTH). The disordered stretch occupies residues 85–127 (REAPPRPSSDAPRSNGHPQAAGQWLGAPSSSNAGAYTQASAPT). Residues 112 to 127 (PSSSNAGAYTQASAPT) are compositionally biased toward polar residues. Positions 131–347 (RLNTALTFDT…GALRKVLAYA (217 aa)) are domain III, AAA+ region. ATP contacts are provided by Gly-175, Gly-177, Lys-178, and Thr-179. The interval 348 to 467 (RFSQKDINIA…LHVLEQTLKG (120 aa)) is domain IV, binds dsDNA.

It belongs to the DnaA family. In terms of assembly, oligomerizes as a right-handed, spiral filament on DNA at oriC.

It is found in the cytoplasm. Its function is as follows. Plays an essential role in the initiation and regulation of chromosomal replication. ATP-DnaA binds to the origin of replication (oriC) to initiate formation of the DNA replication initiation complex once per cell cycle. Binds the DnaA box (a 9 base pair repeat at the origin) and separates the double-stranded (ds)DNA. Forms a right-handed helical filament on oriC DNA; dsDNA binds to the exterior of the filament while single-stranded (ss)DNA is stabiized in the filament's interior. The ATP-DnaA-oriC complex binds and stabilizes one strand of the AT-rich DNA unwinding element (DUE), permitting loading of DNA polymerase. After initiation quickly degrades to an ADP-DnaA complex that is not apt for DNA replication. Binds acidic phospholipids. The protein is Chromosomal replication initiator protein DnaA of Methylibium petroleiphilum (strain ATCC BAA-1232 / LMG 22953 / PM1).